The primary structure comprises 288 residues: Sulfur carrier protein FdhD (288 aa).

Cysteine 122 functions as the Cysteine persulfide intermediate in the catalytic mechanism. 268-273 (FVRGER) serves as a coordination point for Mo-bis(molybdopterin guanine dinucleotide).

It belongs to the FdhD family.

The protein resides in the cytoplasm. Functionally, required for formate dehydrogenase (FDH) activity. Acts as a sulfur carrier protein that transfers sulfur from IscS to the molybdenum cofactor prior to its insertion into FDH. The chain is Sulfur carrier protein FdhD from Anaeromyxobacter dehalogenans (strain 2CP-C).